Consider the following 89-residue polypeptide: Small ribosomal subunit protein uS15 (89 aa).

This sequence belongs to the universal ribosomal protein uS15 family. As to quaternary structure, part of the 30S ribosomal subunit. Forms a bridge to the 50S subunit in the 70S ribosome, contacting the 23S rRNA.

Functionally, one of the primary rRNA binding proteins, it binds directly to 16S rRNA where it helps nucleate assembly of the platform of the 30S subunit by binding and bridging several RNA helices of the 16S rRNA. In terms of biological role, forms an intersubunit bridge (bridge B4) with the 23S rRNA of the 50S subunit in the ribosome. This Prochlorococcus marinus (strain MIT 9215) protein is Small ribosomal subunit protein uS15.